We begin with the raw amino-acid sequence, 32 residues long: Periplasmic [NiFeSe] hydrogenase small subunit (32 aa).

[4Fe-4S] cluster is bound by residues cysteine 18 and cysteine 21.

Belongs to the [NiFe]/[NiFeSe] hydrogenase small subunit family. Heterodimer of a large and a small subunit. [3Fe-4S] cluster serves as cofactor. It depends on [4Fe-4S] cluster as a cofactor.

Its subcellular location is the periplasm. The catalysed reaction is H2 + A = AH2. The sequence is that of Periplasmic [NiFeSe] hydrogenase small subunit from Desulfomicrobium norvegicum (strain DSM 1741 / NCIMB 8310) (Desulfovibrio baculatus (strain Norway 4)).